The primary structure comprises 616 residues: Chaperone protein HscA (616 aa).

The protein belongs to the heat shock protein 70 family.

Chaperone involved in the maturation of iron-sulfur cluster-containing proteins. Has a low intrinsic ATPase activity which is markedly stimulated by HscB. Involved in the maturation of IscU. This Escherichia coli O17:K52:H18 (strain UMN026 / ExPEC) protein is Chaperone protein HscA.